The following is an 867-amino-acid chain: Probable potassium transporter 15 (867 aa).

A compositionally biased stretch (low complexity) spans 1–13; the sequence is MAASSSSSASASA. Positions 1–88 are disordered; it reads MAASSSSSAS…EGEGEDGEKQ (88 aa). Topologically, residues 1-124 are cytoplasmic; that stretch reads MAASSSSSAS…DSEEFDFGRT (124 aa). Over residues 32 to 44 the composition is skewed to acidic residues; that stretch reads TEEDDEGEEDGDT. A compositionally biased stretch (low complexity) spans 45–54; the sequence is VEAAAAAVGA. Residues 63–84 show a composition bias toward acidic residues; the sequence is SEEEEDEEDGGGGGEGEGEGED. The helical transmembrane segment at 125 to 145 threads the bilayer; the sequence is MFLALQTLAVVFGDIGISPLY. At 146–167 the chain is on the extracellular side; that stretch reads TFDVMFSKYPILGEEDVLGALS. The helical transmembrane segment at 168 to 188 threads the bilayer; that stretch reads LVLYTLISMPLVKYVLVVLWA. The Cytoplasmic portion of the chain corresponds to 189–252; the sequence is NDDGEGGIFA…KLESSLLLKK (64 aa). The helical transmembrane segment at 253–273 threads the bilayer; the sequence is LLLGLVLFGTAMFISNGVITP. The Extracellular segment spans residues 274-285; sequence AMSVLSAVSGLK. Residues 286-306 traverse the membrane as a helical segment; it reads VGIPNASQGLVVMISVVLLVI. Topologically, residues 307-317 are cytoplasmic; it reads LYSVQRYATSK. A helical membrane pass occupies residues 318–338; it reads MGFALGPSLLIWFCCLGGIGI. At 339 to 365 the chain is on the extracellular side; that stretch reads YNLSTYGPAAFKAFNPLYIIYYFGRNP. The N-linked (GlcNAc...) asparagine glycan is linked to Asn340. Residues 366–386 traverse the membrane as a helical segment; that stretch reads FQAWLSLAGCLLCATGSEAIF. The Cytoplasmic segment spans residues 387-400; it reads ANLSYFPVRYVQSM. A helical membrane pass occupies residues 401–421; sequence FALLVLPCLVLAYLGQGAFLI. Topologically, residues 422-433 are extracellular; the sequence is ANQNSSEQIFFS. N-linked (GlcNAc...) asparagine glycosylation is present at Asn425. Residues 434–454 traverse the membrane as a helical segment; the sequence is SIPSGVFWPVFLIANLAALIA. Topologically, residues 455–490 are cytoplasmic; sequence SRTMTTAIFQCLKQSIALGCFPRLKIIHTSRKFMAK. The chain crosses the membrane as a helical span at residues 491–511; it reads IYIPVVNWFLLFSCLGFILLF. Over 512-522 the chain is Extracellular; that stretch reads RSIYDVGNAYA. The chain crosses the membrane as a helical span at residues 523–543; the sequence is IAELGVMIMATVYVTIIMLLI. The Cytoplasmic segment spans residues 544-545; sequence WE. A helical membrane pass occupies residues 546-566; the sequence is TSIVKVLSFVITFLSLELVFF. The Extracellular segment spans residues 567 to 572; it reads SSSLSS. Residues 573–593 traverse the membrane as a helical segment; it reads VGDGGWALIIFASGILMVMFI. Residues 594–867 lie on the Cytoplasmic side of the membrane; it reads WNYGSKLKYD…VMQVRLTSYV (274 aa).

It belongs to the HAK/KUP transporter (TC 2.A.72.3) family.

The protein resides in the membrane. Its function is as follows. High-affinity potassium transporter. This Oryza sativa subsp. japonica (Rice) protein is Probable potassium transporter 15 (HAK15).